The chain runs to 280 residues: 3-hydroxyanthranilate 3,4-dioxygenase (280 aa).

A domain A (catalytic) region spans residues 1 to 160; sequence MAIPVNVKKW…SEQYKSGKPD (160 aa). Arg43 is a binding site for O2. Fe cation is bound by residues His47, Glu53, and His91. Glu53 is a binding site for substrate. Substrate contacts are provided by Arg95 and Glu105. The linker stretch occupies residues 161 to 177; that stretch reads PAQPIGKMPFFLNTEQV. The tract at residues 178 to 280 is domain B; it reads MEPFSFQNWL…IALSTSQVPA (103 aa).

It belongs to the 3-HAO family. As to quaternary structure, monomer. Requires Fe(2+) as cofactor.

The protein localises to the cytoplasm. It localises to the cytosol. It carries out the reaction 3-hydroxyanthranilate + O2 = (2Z,4Z)-2-amino-3-carboxymuconate 6-semialdehyde. The protein operates within cofactor biosynthesis; NAD(+) biosynthesis; quinolinate from L-kynurenine: step 3/3. Its function is as follows. Catalyzes the oxidative ring opening of 3-hydroxyanthranilate to 2-amino-3-carboxymuconate semialdehyde, which spontaneously cyclizes to quinolinate. The protein is 3-hydroxyanthranilate 3,4-dioxygenase (haao) of Xenopus tropicalis (Western clawed frog).